A 627-amino-acid chain; its full sequence is (R)-linalool synthase, chloroplastic (627 aa).

The N-terminal 21 residues, 1-21 (MAFVSIAPLASRCCVHKSFVS), are a transit peptide targeting the chloroplast. Mg(2+) is bound by residues Asp378, Asp382, and Glu530. Positions 378 to 382 (DDIYD) match the DDXXD motif motif.

Belongs to the terpene synthase family. Tpsd subfamily. It depends on Mg(2+) as a cofactor. Requires Mn(2+) as cofactor.

Its subcellular location is the plastid. It is found in the chloroplast. The enzyme catalyses (2E)-geranyl diphosphate + H2O = (R)-linalool + diphosphate. It participates in terpene metabolism; oleoresin biosynthesis. Its function is as follows. Terpene synthase (TPS) involved in the biosynthesis of monoterpene natural products included in conifer oleoresin secretions and volatile emissions; these compounds contribute to biotic and abiotic stress defense against herbivores and pathogens. Catalyzes the conversion of (2E)-geranyl diphosphate (GPP) to (R)-linalool. This is (R)-linalool synthase, chloroplastic from Picea glauca (White spruce).